The sequence spans 288 residues: Inorganic pyrophosphatase (288 aa).

R80 serves as a coordination point for diphosphate. Mg(2+)-binding residues include D117, D122, and D154. Residues 252 to 271 (TPSYSDAAAQEIPSASPAPA) are disordered. Residues 258–271 (AAAQEIPSASPAPA) are compositionally biased toward low complexity.

Belongs to the PPase family. Requires Mg(2+) as cofactor.

It localises to the cytoplasm. The catalysed reaction is diphosphate + H2O = 2 phosphate + H(+). The polypeptide is Inorganic pyrophosphatase (IPP1) (Candida albicans (strain SC5314 / ATCC MYA-2876) (Yeast)).